A 146-amino-acid polypeptide reads, in one-letter code: Putative pre-16S rRNA nuclease (146 aa).

This sequence belongs to the YqgF nuclease family.

The protein localises to the cytoplasm. In terms of biological role, could be a nuclease involved in processing of the 5'-end of pre-16S rRNA. In Pseudomonas syringae pv. syringae (strain B728a), this protein is Putative pre-16S rRNA nuclease.